We begin with the raw amino-acid sequence, 337 residues long: G-protein coupled receptor 26 (337 aa).

Over 1 to 10 (MNSWDAGLAG) the chain is Extracellular. The chain crosses the membrane as a helical span at residues 11-31 (LLVGTIGVSLLSNGLVLLCLL). At 32 to 47 (HSADIRRQAPALFTLN) the chain is on the cytoplasmic side. Residues 48 to 68 (LTCGNLLCTVVNMPLTLAGVV) form a helical membrane-spanning segment. Residues 69-81 (AQRQPAGDRLCRL) are Extracellular-facing. Cysteine 79 and cysteine 156 are oxidised to a cystine. A helical transmembrane segment spans residues 82–102 (AAFLDTFLAANSMLSMAALSI). Residues 103–123 (DRWVAVVFPLSYRAKMRLRDA) lie on the Cytoplasmic side of the membrane. A helical transmembrane segment spans residues 124 to 144 (AFMVAYTWLHALTFPATALAL). The Extracellular portion of the chain corresponds to 145–168 (SWLGFHQLYASCTLCSRRPDERLR). The chain crosses the membrane as a helical span at residues 169–189 (FAVFTSAFHALSFLLSFIVLC). Residues 190–245 (FTYLKVLKVARFHCKRIDVITMQTLVLLVDIHPSVRERCLEEQKRRRQRATKKIST) are Cytoplasmic-facing. A helical membrane pass occupies residues 246-266 (FIGTFLVCFAPYVITRLVELF). Residues 267 to 276 (STAPIGSHWG) lie on the Extracellular side of the membrane. A helical membrane pass occupies residues 277-297 (VLSKCLAYSKAASDPFVYSLL). Residues 298–337 (RHQYRRSCKELLNRIFNRRSLHSVGLTGDSHSQNILPVSE) lie on the Cytoplasmic side of the membrane.

The protein belongs to the G-protein coupled receptor 1 family. As to expression, exclusively expressed in the brain. Prominent expression is detected throughout the entire neocortex at all rostrocaudal and dorsoventral levels. Strong expression is detected in olfactory and auditory sensory areas.

The protein localises to the cell membrane. Orphan receptor. Displays a significant level of constitutive activity. Its effect is mediated by G(s)-alpha protein that stimulate adenylate cyclase, resulting in an elevation of intracellular cAMP. The sequence is that of G-protein coupled receptor 26 (Gpr26) from Mus musculus (Mouse).